Consider the following 58-residue polypeptide: Probable ferredoxin (58 aa).

4Fe-4S ferredoxin-type domains lie at 2-30 (VAKVNVDLCTGCGSCVDECPAAAISLNDD) and 31-58 (GIATVDESECLDCGSCEDACPNNAITIE). Cys-10, Cys-13, Cys-16, Cys-20, Cys-40, Cys-43, Cys-46, and Cys-50 together coordinate [4Fe-4S] cluster.

The cofactor is [4Fe-4S] cluster.

Ferredoxins are iron-sulfur proteins that transfer electrons in a wide variety of metabolic reactions. The protein is Probable ferredoxin of Methanosarcina thermophila.